Here is a 347-residue protein sequence, read N- to C-terminus: Dihydroorotase (347 aa).

H14 and H16 together coordinate Zn(2+). Substrate is bound by residues 16–18 (HLR) and N42. K100, H137, and H175 together coordinate Zn(2+). At K100 the chain carries N6-carboxylysine. Substrate is bound at residue H137. L220 is a binding site for substrate. Residue D248 coordinates Zn(2+). The active site involves D248. 2 residues coordinate substrate: H252 and A264.

The protein belongs to the metallo-dependent hydrolases superfamily. DHOase family. Class II DHOase subfamily. In terms of assembly, homodimer. Zn(2+) serves as cofactor.

It carries out the reaction (S)-dihydroorotate + H2O = N-carbamoyl-L-aspartate + H(+). It functions in the pathway pyrimidine metabolism; UMP biosynthesis via de novo pathway; (S)-dihydroorotate from bicarbonate: step 3/3. Functionally, catalyzes the reversible cyclization of carbamoyl aspartate to dihydroorotate. The polypeptide is Dihydroorotase (Pseudomonas syringae pv. tomato (strain ATCC BAA-871 / DC3000)).